Consider the following 152-residue polypeptide: Toxin Res (152 aa).

The protein belongs to the MbcT/ParT/Res family. As to quaternary structure, homodimer. Forms a complex with cognate antitoxin Xre.

In terms of biological role, toxic component of a type II toxin-antitoxin (TA) system. Expression in E.coli inhibits cell growth; bacteriostasis is neutralized by expression of cognate antitoxin Xre. Probably depletes intracellular NAD(+). This chain is Toxin Res, found in Yersinia enterocolitica serotype O:8 / biotype 1B (strain NCTC 13174 / 8081).